The following is a 513-amino-acid chain: ATP synthase subunit alpha (513 aa).

169–176 (GDRQTGKT) provides a ligand contact to ATP.

It belongs to the ATPase alpha/beta chains family. As to quaternary structure, F-type ATPases have 2 components, CF(1) - the catalytic core - and CF(0) - the membrane proton channel. CF(1) has five subunits: alpha(3), beta(3), gamma(1), delta(1), epsilon(1). CF(0) has three main subunits: a(1), b(2) and c(9-12). The alpha and beta chains form an alternating ring which encloses part of the gamma chain. CF(1) is attached to CF(0) by a central stalk formed by the gamma and epsilon chains, while a peripheral stalk is formed by the delta and b chains.

It is found in the cell inner membrane. It catalyses the reaction ATP + H2O + 4 H(+)(in) = ADP + phosphate + 5 H(+)(out). Its function is as follows. Produces ATP from ADP in the presence of a proton gradient across the membrane. The alpha chain is a regulatory subunit. The chain is ATP synthase subunit alpha from Shewanella loihica (strain ATCC BAA-1088 / PV-4).